The chain runs to 320 residues: MQTKNKQGVLLVNLGTPDEPTAPAVKRFLSQFLHDHRVVDMTRWLWCPILHGVILPIRSPKVAKLYESVWMEEGSPLMVYSKRQAKKLAQHLDMPVELGMTYGNPSLQSGFEALIAQGVEEVIVLPLYPQYSGTTTAAVSDGITKAFKQLPVMPAFSFIRDYHDHPMYIEALAHSVRQYWEEHGKGDYLLCSYHGIPKRYADNGDIYPQHCEATTRLLGEALGLSSDQIGMAYQSRFGREEWLQPYTDKTLETITSKGVKKIDIMTPAFSSDCLETLEEIAGENKEIFMEAGGEQFHYIPCLNDDDMHIDMMAELVRSKL.

2 residues coordinate Fe cation: histidine 194 and glutamate 275.

It belongs to the ferrochelatase family.

The protein localises to the cytoplasm. It carries out the reaction heme b + 2 H(+) = protoporphyrin IX + Fe(2+). The protein operates within porphyrin-containing compound metabolism; protoheme biosynthesis; protoheme from protoporphyrin-IX: step 1/1. In terms of biological role, catalyzes the ferrous insertion into protoporphyrin IX. The protein is Ferrochelatase of Vibrio parahaemolyticus serotype O3:K6 (strain RIMD 2210633).